Reading from the N-terminus, the 174-residue chain is Co-chaperone protein HscB (174 aa).

Residues asparagine 2–leucine 74 form the J domain.

It belongs to the HscB family. As to quaternary structure, interacts with HscA and stimulates its ATPase activity. Interacts with IscU.

Functionally, co-chaperone involved in the maturation of iron-sulfur cluster-containing proteins. Seems to help targeting proteins to be folded toward HscA. This is Co-chaperone protein HscB from Buchnera aphidicola subsp. Acyrthosiphon pisum (strain 5A).